Consider the following 236-residue polypeptide: E3 ubiquitin-protein ligase RNF187 (236 aa).

The RING-type zinc-finger motif lies at 12-53 (CALCQRAPREPVRADCGHRFCRACVVRFWAEEDGPFPCPECA). An asymmetric dimethylarginine; by PRMT1 mark is found at Arg-98 and Arg-109. Residue Lys-195 forms a Glycyl lysine isopeptide (Lys-Gly) (interchain with G-Cter in ubiquitin) linkage. Ser-200 carries the phosphoserine modification. Residues Lys-224 and Lys-225 each participate in a glycyl lysine isopeptide (Lys-Gly) (interchain with G-Cter in ubiquitin) cross-link.

In terms of assembly, homodimer. Interacts with JUN, independently of JUN phosphorylation. Interacts (via C-terminus) with TRIM7. Post-translationally, ubiquitinated; undergoes 'Lys-48'-linked autoubiquitination in the absence of growth factors and MAP3K1-induced 'Lys-63'-linked polyubiquitination. 'Lys-48'-autoubiquitination leads to degradation by the proteasome, while MAP3K1-induced 'Lys-63'-linked polyubiquitination results in the stabilization of the protein. 'Lys-48'- and 'Lys-63'-linked polyubiquitinations occur most probably on the same 3 C-terminal lysine residues (Lys-195, Lys-224 and Lys-225) and are thus mutually exclusive. Other sites of ubiquitination are not excluded. 'Lys-63'-linked polyubiquitination by TRIM7 in response to growth factor signaling via the MEK/ERK pathway enhances protein stability. In terms of processing, arginine methylation by PRMT1 stabilizes RNF187 by facilitating K63-linked ubiquitin chain formation, and enables dimerization, c-Jun interaction and subsequent AP1 target gene expression.

The protein localises to the cytoplasm. It is found in the nucleus. The enzyme catalyses S-ubiquitinyl-[E2 ubiquitin-conjugating enzyme]-L-cysteine + [acceptor protein]-L-lysine = [E2 ubiquitin-conjugating enzyme]-L-cysteine + N(6)-ubiquitinyl-[acceptor protein]-L-lysine.. Its pathway is protein modification; protein ubiquitination. Functionally, E3 ubiquitin-protein ligase that acts as a coactivator of JUN-mediated gene activation in response to growth factor signaling via the MAP3K1 pathway, independently from MAPK8. This Mus musculus (Mouse) protein is E3 ubiquitin-protein ligase RNF187 (Rnf187).